Consider the following 423-residue polypeptide: Mannose-6-phosphate isomerase (423 aa).

Alanine 2 is subject to N-acetylalanine. Phosphoserine occurs at positions 102 and 108. Zn(2+)-binding residues include glutamine 110, histidine 112, glutamate 137, and histidine 276. Residue arginine 295 is part of the active site.

Belongs to the mannose-6-phosphate isomerase type 1 family. Requires Zn(2+) as cofactor.

The protein localises to the cytoplasm. It catalyses the reaction D-mannose 6-phosphate = D-fructose 6-phosphate. It participates in nucleotide-sugar biosynthesis; GDP-alpha-D-mannose biosynthesis; alpha-D-mannose 1-phosphate from D-fructose 6-phosphate: step 1/2. Its function is as follows. Isomerase that catalyzes the interconversion of fructose-6-P and mannose-6-P and has a critical role in the supply of D-mannose derivatives required for many eukaryotic glycosylation reactions. In Pan troglodytes (Chimpanzee), this protein is Mannose-6-phosphate isomerase (MPI).